A 217-amino-acid chain; its full sequence is Phosphoenolpyruvate guanylyltransferase (217 aa).

Phosphoenolpyruvate-binding residues include Thr-150, Gly-165, and Ser-168.

Belongs to the CofC family.

The catalysed reaction is phosphoenolpyruvate + GTP + H(+) = enolpyruvoyl-2-diphospho-5'-guanosine + diphosphate. It functions in the pathway cofactor biosynthesis; coenzyme F420 biosynthesis. Its function is as follows. Guanylyltransferase that catalyzes the activation of phosphoenolpyruvate (PEP) as enolpyruvoyl-2-diphospho-5'-guanosine, via the condensation of PEP with GTP. It is involved in the biosynthesis of coenzyme F420, a hydride carrier cofactor. This is Phosphoenolpyruvate guanylyltransferase from Mycobacterium marinum (strain ATCC BAA-535 / M).